A 293-amino-acid polypeptide reads, in one-letter code: Diaminopimelate epimerase (293 aa).

Residues Asn17, Gln47, and Asn67 each coordinate substrate. Catalysis depends on Cys76, which acts as the Proton donor. Substrate contacts are provided by residues 77–78, Asn164, Asn197, and 215–216; these read GN and ER. Cys224 functions as the Proton acceptor in the catalytic mechanism. 225–226 is a substrate binding site; that stretch reads GS.

Belongs to the diaminopimelate epimerase family. Homodimer.

The protein localises to the cytoplasm. It catalyses the reaction (2S,6S)-2,6-diaminopimelate = meso-2,6-diaminopimelate. It participates in amino-acid biosynthesis; L-lysine biosynthesis via DAP pathway; DL-2,6-diaminopimelate from LL-2,6-diaminopimelate: step 1/1. Catalyzes the stereoinversion of LL-2,6-diaminopimelate (L,L-DAP) to meso-diaminopimelate (meso-DAP), a precursor of L-lysine and an essential component of the bacterial peptidoglycan. This chain is Diaminopimelate epimerase, found in Rhodopseudomonas palustris (strain ATCC BAA-98 / CGA009).